The primary structure comprises 210 residues: Ribosomal RNA small subunit methyltransferase G (210 aa).

S-adenosyl-L-methionine-binding positions include glycine 77, phenylalanine 82, 100–102 (ERS), 128–129 (VE), and arginine 141.

It belongs to the methyltransferase superfamily. RNA methyltransferase RsmG family.

The protein localises to the cytoplasm. In terms of biological role, specifically methylates the N7 position of a guanine in 16S rRNA. This chain is Ribosomal RNA small subunit methyltransferase G, found in Borrelia duttonii (strain Ly).